Consider the following 76-residue polypeptide: Omega-conotoxin-like TxO5 (76 aa).

The first 22 residues, 1-22, serve as a signal peptide directing secretion; it reads MKLTCMVIVAVLFLTAWTFVTA. A propeptide spanning residues 23–50 is cleaved from the precursor; that stretch reads ITSNGLENLFPNAHHEMKNPEASKLNKR. Cystine bridges form between C51/C66, C58/C70, and C65/C75.

Belongs to the conotoxin O1 superfamily. In terms of tissue distribution, expressed by the venom duct.

The protein resides in the secreted. In terms of biological role, omega-conotoxins act at presynaptic membranes, they bind and block voltage-gated calcium channels (Cav). This chain is Omega-conotoxin-like TxO5 (TXO5), found in Conus textile (Cloth-of-gold cone).